Here is an 826-residue protein sequence, read N- to C-terminus: E3 ubiquitin-protein ligase SH3RF1 (826 aa).

Residues 12–53 (CPVCLERLDASAKVLPCQHTFCKRCLLGIVSSRKELRCPECR) form an RING-type zinc finger. A disordered region spans residues 80 to 130 (PRKAGDGGSAGNSTNALRAQGSVTTNGGLNDAQNTQSGQQRIQARSPPVRG). Residues 90 to 122 (GNSTNALRAQGSVTTNGGLNDAQNTQSGQQRIQ) show a composition bias toward polar residues. SH3 domains are found at residues 132–191 (PQLP…IIKP) and 194–257 (QPPP…FNSA). Positions 266 to 319 (KPSGADTGEGSSGTSHSGNSQKQADAKKNTKKRHSFTSLTMSNKSSQSVQNRHS) are disordered. Low complexity predominate over residues 273-285 (GEGSSGTSHSGNS). Residues 301–317 (FTSLTMSNKSSQSVQNR) show a composition bias toward polar residues. In terms of domain architecture, SH3 3 spans 398 to 459 (ARPSVFIAIY…PGNYVAPVTR (62 aa)). Disordered regions lie at residues 647–694 (NSAA…QTNS) and 725–759 (DSVS…CSSL). Over residues 652–663 (KQDKDSKKEKKG) the composition is skewed to basic and acidic residues. One can recognise an SH3 4 domain in the interval 767–826 (RPCERYRVMVSYPPQSEAELELKEGDIVFVHKKREDGWFKGTLQRNGKTGLFPGSFVENI).

The protein belongs to the SH3RF family. In terms of processing, autoubiquitinated. Ubiquitinated by SH3RF2, leading to proteasome-mediated degradation.

It is found in the cytoplasm. The protein localises to the perinuclear region. It localises to the cell projection. Its subcellular location is the lamellipodium. The protein resides in the golgi apparatus. It is found in the trans-Golgi network. The catalysed reaction is S-ubiquitinyl-[E2 ubiquitin-conjugating enzyme]-L-cysteine + [acceptor protein]-L-lysine = [E2 ubiquitin-conjugating enzyme]-L-cysteine + N(6)-ubiquitinyl-[acceptor protein]-L-lysine.. It functions in the pathway protein modification; protein ubiquitination. Has E3 ubiquitin-protein ligase activity. In the absence of an external substrate, it can catalyze self-ubiquitination. Acts as a scaffold protein that contributes to the effective activation of the JNK signaling pathway. Plays an essential role in the anterior neural development. The chain is E3 ubiquitin-protein ligase SH3RF1 (sh3rf1) from Xenopus laevis (African clawed frog).